The primary structure comprises 595 residues: MVDFTNPNTLAASVLVETLFRLGLQQAVICPGSRSSPLTVALARHGGIDCVVSLDERSASFFALGHGKRTGQPVALVCTSGTAAANFLPAIIEAHYSQVPLLVLTGDRPPRLRHCRAGQTIDQTKLYGHYPQWQTELALPEPNMDYCHYLRQTALHSWQKCFWPGLGVVHLNCPFDEPLVPLEHARESLQHLAEEFSKEHFYRGLTTFTTMNRGEAISLPVNFSIFSFPSPQLDFSPLGLILVGVMPGGETPSLLTDILAIARGLGYPVLCDALCSLRNYDDGQTALITNYDFLIRCPRWAEQLVPEQIIQIGELPTSKALRHWLGTIDCPRYILNFHGENLDPLQGQTIYLSASVAQVAEYIHNQGFIPDAEQKNYAHSWLEKQRQSQTIIISALADAHTPLMVAQLAHCLPPQTNLFVANSLPVRWLEFFWPANGDHHRIFVNRGANGIDGTLSTAMGIAHRSRGETVLLTGDLSLLHDSNGFLNQSQMRGNLTIILLNNNGGGIFQTLPIAQCEDVFETYFATPQGVDFGQLCRTYGVEHKIITNLWDLKEQWPSNNSSPIRVLEIIGDRHQEAQWLKSLQAQFCCADSLIQ.

It belongs to the TPP enzyme family. MenD subfamily. In terms of assembly, homodimer. The cofactor is Mg(2+). It depends on Mn(2+) as a cofactor. Thiamine diphosphate serves as cofactor.

The catalysed reaction is isochorismate + 2-oxoglutarate + H(+) = 5-enolpyruvoyl-6-hydroxy-2-succinyl-cyclohex-3-ene-1-carboxylate + CO2. It functions in the pathway quinol/quinone metabolism; 1,4-dihydroxy-2-naphthoate biosynthesis; 1,4-dihydroxy-2-naphthoate from chorismate: step 2/7. Its pathway is cofactor biosynthesis; phylloquinone biosynthesis. Functionally, catalyzes the thiamine diphosphate-dependent decarboxylation of 2-oxoglutarate and the subsequent addition of the resulting succinic semialdehyde-thiamine pyrophosphate anion to isochorismate to yield 2-succinyl-5-enolpyruvyl-6-hydroxy-3-cyclohexene-1-carboxylate (SEPHCHC). This is 2-succinyl-5-enolpyruvyl-6-hydroxy-3-cyclohexene-1-carboxylate synthase from Synechocystis sp. (strain ATCC 27184 / PCC 6803 / Kazusa).